The chain runs to 127 residues: Fluoride-specific ion channel FluC (127 aa).

4 consecutive transmembrane segments (helical) span residues 7–27 (LFLI…LTLL), 37–57 (FGTL…LAMF), 70–90 (FFVT…AEVI), and 102–122 (ITIT…GVFI). Na(+) contacts are provided by Gly-77 and Thr-80.

It belongs to the fluoride channel Fluc/FEX (TC 1.A.43) family.

Its subcellular location is the cell inner membrane. The catalysed reaction is fluoride(in) = fluoride(out). With respect to regulation, na(+) is not transported, but it plays an essential structural role and its presence is essential for fluoride channel function. Its function is as follows. Fluoride-specific ion channel. Important for reducing fluoride concentration in the cell, thus reducing its toxicity. In Histophilus somni (strain 129Pt) (Haemophilus somnus), this protein is Fluoride-specific ion channel FluC.